Consider the following 104-residue polypeptide: Large ribosomal subunit protein bL21 (104 aa).

It belongs to the bacterial ribosomal protein bL21 family. Part of the 50S ribosomal subunit. Contacts protein L20.

Its function is as follows. This protein binds to 23S rRNA in the presence of protein L20. This is Large ribosomal subunit protein bL21 from Lactococcus lactis subsp. lactis (strain IL1403) (Streptococcus lactis).